Consider the following 1230-residue polypeptide: SAM and SH3 domain-containing protein 1 (1230 aa).

The segment covering 1 to 10 has biased composition (low complexity); it reads MEEDAGAASP. The tract at residues 1-30 is disordered; that stretch reads MEEDAGAASPAPEPEPEVDPARELEPEAGV. Phosphoserine occurs at positions 83 and 241. Disordered stretches follow at residues 211–249 and 275–337; these read RQSS…EDSV and KKPS…LDTW. Basic and acidic residues predominate over residues 275 to 297; it reads KKPSAEGGEEHVFENSPVQDERS. Residues 324–336 show a composition bias toward low complexity; that stretch reads SLTPSPSSSSLDT. Ser-400 is subject to Phosphoserine. Disordered regions lie at residues 439–566, 610–633, and 705–792; these read PRIS…YDTD, EEKP…SVED, and VDNQ…KSCD. A compositionally biased stretch (polar residues) spans 461 to 470; that stretch reads KYSSPVSEQD. Residues 485 to 494 show a composition bias toward basic and acidic residues; that stretch reads PDSEHVDKPK. Low complexity predominate over residues 498–516; that stretch reads GGSVESLRSSLSGQSSMSG. A compositionally biased stretch (polar residues) spans 517-529; that stretch reads QTVSTTDSSTSNR. Residues 547-608 form the SH3 domain; sequence PFCGRARVHT…KFIYVDVLNE (62 aa). The span at 615–624 shows a compositional bias: basic residues; the sequence is RPTRRRKKGR. In terms of domain architecture, SAM 1 spans 626-690; sequence SQPKSVEDLL…LTAVELLQEY (65 aa). The segment covering 737 to 758 has biased composition (polar residues); it reads VLSTKSSTESNLKSFTRSQPGN. A compositionally biased stretch (basic and acidic residues) spans 768–779; the sequence is GEVRKQGEEGRL. Residues Ser-813 and Ser-831 each carry the phosphoserine modification. Disordered regions lie at residues 818-875 and 915-1045; these read EGPE…LPRG and PPQC…PWLA. The required for interaction with TRAF6 stretch occupies residues 844–852; it reads NVPTEMPET. Residues 852-868 are compositionally biased toward polar residues; it reads TCSQNVPEVPQKTSACT. Positions 940-956 are enriched in basic and acidic residues; it reads GLRKGHDHHPLGTKEGV. Polar residues predominate over residues 962–972; the sequence is APETRTQSRHP. Residues 1008 to 1019 show a composition bias toward low complexity; that stretch reads SPASPVSPSDCP. Residues 1160–1224 enclose the SAM 2 domain; that stretch reads GCVASMSDWL…ITAARLFKLP (65 aa).

As to quaternary structure, interacts with GNAS. Interacts with IQGAP1. Interacts with TRAF6 (via C-terminus); the interaction is LPS-dependent. Interacts with MAP3K7, CHUK and IKBKB. In terms of tissue distribution, expressed in the microvascular endothelium of various organs, as well as in parenchymal cells. Expressed in the endothelium but not lymphoid cells of spleen and thymus.

The protein localises to the cytoplasm. Its function is as follows. Is a positive regulator of NF-kappa-B signaling downstream of TLR4 activation. It acts as a scaffold molecule to assemble a molecular complex that includes TRAF6, MAP3K7, CHUK and IKBKB, thereby facilitating NF-kappa-B signaling activation. Regulates TRAF6 and MAP3K7 ubiquitination. Involved in the regulation of cell mobility. Regulates lipolysaccharide (LPS)-induced endothelial cell migration. Is involved in the regulation of skin pigmentation through the control of melanocyte migration in the epidermis. This is SAM and SH3 domain-containing protein 1 (Sash1) from Mus musculus (Mouse).